Here is a 36-residue protein sequence, read N- to C-terminus: Kappa-isophellitoxin-Tst1a (36 aa).

The region spanning 2–36 (CENNFSDRECERRKKDCDSSMKFRELSCPKTCGTC) is the ShKT domain. 3 disulfides stabilise this stretch: Cys-2/Cys-36, Cys-11/Cys-29, and Cys-18/Cys-33.

The protein belongs to the sea anemone type 1 potassium channel toxin family. Type 1a subfamily. In terms of tissue distribution, predominantly expressed in mesenterial filaments (at protein level), a morphological structure that has a functional role in prey killing and digestion. Also expressed in club-tips, tentacles, actinopharynx, body column, mesenterial filaments and pedal disk.

The protein localises to the secreted. It is found in the nematocyst. Probable toxin with unknown function. Does not inhibit all channels tested. Is not cytotoxic on macrophage. The polypeptide is Kappa-isophellitoxin-Tst1a (Telmatactis stephensoni (Sea anemone)).